The following is a 166-amino-acid chain: Large ribosomal subunit protein uL11z (166 aa).

It belongs to the universal ribosomal protein uL11 family.

Functionally, binds directly to 26S ribosomal RNA. The protein is Large ribosomal subunit protein uL11z (RPL12A) of Arabidopsis thaliana (Mouse-ear cress).